Here is a 371-residue protein sequence, read N- to C-terminus: Mitogen-activated protein kinase homolog MMK2 (371 aa).

The 287-residue stretch at 37 to 323 (VPPIRSVGRG…VDEALCHPYM (287 aa)) folds into the Protein kinase domain. ATP-binding positions include 43–51 (VGRGAYGIV) and Lys66. Asp163 acts as the Proton acceptor in catalysis. Thr195 carries the post-translational modification Phosphothreonine. Positions 195–197 (TEY) match the TXY motif. Tyr197 carries the post-translational modification Phosphotyrosine.

It belongs to the protein kinase superfamily. CMGC Ser/Thr protein kinase family. MAP kinase subfamily. Requires Mg(2+) as cofactor. In terms of processing, dually phosphorylated on Thr-195 and Tyr-197, which activates the enzyme. Autophosphorylated.

It catalyses the reaction L-seryl-[protein] + ATP = O-phospho-L-seryl-[protein] + ADP + H(+). It carries out the reaction L-threonyl-[protein] + ATP = O-phospho-L-threonyl-[protein] + ADP + H(+). With respect to regulation, activated by tyrosine and threonine phosphorylation. The sequence is that of Mitogen-activated protein kinase homolog MMK2 (MMK2) from Medicago sativa (Alfalfa).